Reading from the N-terminus, the 694-residue chain is Lamina-associated polypeptide 2, isoform alpha (694 aa).

Residues 5-48 enclose the LEM-like domain; the sequence is LEDPSVLTKDKLKSELVANNVTLPAGEQRKDVYVQLYLQHLTAR. Disordered stretches follow at residues 47 to 117 and 150 to 209; these read ARNR…ELTN and REQG…FSEL. Residues 49 to 108 are linker; the sequence is NRPPLPAGTNSKGPPDFSSDEEREPTPVLGSGAAAAGRSRAAVGRKATKKTDKPRQEDKD. Threonine 57 bears the Phosphothreonine mark. Residues serine 59, serine 66, and serine 67 each carry the phosphoserine modification. Threonine 74 carries the phosphothreonine modification. Low complexity predominate over residues 78–93; that stretch reads GSGAAAAGRSRAAVGR. A Phosphoserine modification is found at serine 79. Arginine 86 and arginine 88 each carry omega-N-methylarginine. Over residues 97-106 the composition is skewed to basic and acidic residues; that stretch reads KKTDKPRQED. Residues 107 to 117 are compositionally biased toward acidic residues; that stretch reads KDDLDVTELTN. Positions 109–153 constitute an LEM domain; sequence DLDVTELTNEDLLDQLVKYGVNPGPIVGTTRKLYEKKLLKLREQG. A Phosphothreonine modification is found at threonine 154. A compositionally biased stretch (polar residues) spans 155–178; the sequence is ESRSSTPLPTISSSAENTRQNGSN. Serine 156 and serine 159 each carry phosphoserine. Phosphothreonine is present on residues threonine 160 and threonine 164. Phosphoserine is present on residues serine 166 and serine 168. A compositionally biased stretch (basic and acidic residues) spans 179–191; it reads DSDRYSDNEEGKK. The short motif at 190–196 is the Nuclear localization signal element; sequence KKKEHKK. Phosphoserine occurs at positions 272, 312, 351, 354, 370, and 424. A disordered region spans residues 338 to 368; that stretch reads QPLCPERSHISDQSPLSSKRKALEESESSQL. The stretch at 558–657 forms a coiled coil; the sequence is TESCNQQLDL…VGRRYLWLKD (100 aa). An N6-acetyllysine modification is found at lysine 656.

The protein belongs to the LEM family. As to quaternary structure, interacts with LMNA, BANF1 and RB1 and with chromosomes. Associates directly or indirectly with lamins at specific cell-cycle stages. Interacts with CMTM6. Post-translationally, phosphorylated in a mitose-specific manner. As to expression, expressed in many tissues. Most abundant in adult thymus and fetal liver.

The protein resides in the nucleus. It localises to the chromosome. In terms of biological role, may be involved in the structural organization of the nucleus and in the post-mitotic nuclear assembly. Plays an important role, together with LMNA, in the nuclear anchorage of RB1. Functionally, TP and TP5 may play a role in T-cell development and function. TP5 is an immunomodulating pentapeptide. The polypeptide is Lamina-associated polypeptide 2, isoform alpha (TMPO) (Homo sapiens (Human)).